Here is a 223-residue protein sequence, read N- to C-terminus: 7-cyano-7-deazaguanine synthase (223 aa).

Phe-15–Leu-25 lines the ATP pocket. Cys-191, Cys-200, Cys-203, and Cys-206 together coordinate Zn(2+).

Belongs to the QueC family. Homodimer. Zn(2+) serves as cofactor.

It carries out the reaction 7-carboxy-7-deazaguanine + NH4(+) + ATP = 7-cyano-7-deazaguanine + ADP + phosphate + H2O + H(+). Its pathway is purine metabolism; 7-cyano-7-deazaguanine biosynthesis. Functionally, catalyzes the ATP-dependent conversion of 7-carboxy-7-deazaguanine (CDG) to 7-cyano-7-deazaguanine (preQ(0)). This is 7-cyano-7-deazaguanine synthase from Staphylococcus epidermidis (strain ATCC 35984 / DSM 28319 / BCRC 17069 / CCUG 31568 / BM 3577 / RP62A).